We begin with the raw amino-acid sequence, 229 residues long: (S)-2-haloacid dehalogenase 2 (229 aa).

D10 acts as the Nucleophile in catalysis. An (S)-2-haloacid is bound by residues 11 to 12 (LY), R41, and 118 to 119 (SN). The segment at 175–180 (SSNAWD) is important for catalytic activity.

This sequence belongs to the HAD-like hydrolase superfamily. S-2-haloalkanoic acid dehalogenase family.

The enzyme catalyses an (S)-2-haloacid + H2O = a (2R)-2-hydroxycarboxylate + a halide anion + H(+). The catalysed reaction is (S)-2-chloropropanoate + H2O = (R)-lactate + chloride + H(+). Its function is as follows. Catalyzes the hydrolytic dehalogenation of small (S)-2-haloalkanoic acids to yield the corresponding (R)-2-hydroxyalkanoic acids. Acts on acids of short chain lengths, C(2) to C(4), with inversion of configuration at C-2. Active with 2-halogenated carboxylic acids and converts only the S-isomer (or L-isomer) of 2-chloropropionic acid with inversion of configuration to produce R-lactate (or D-isomer). The protein is (S)-2-haloacid dehalogenase 2 of Pseudomonas sp. (strain CBS-3).